The sequence spans 500 residues: Protein FAM83F (500 aa).

Ala2 carries the post-translational modification N-acetylalanine. The DUF1669 stretch occupies residues Ala2 to Leu300. Phosphoserine is present on Ser4. 3 disordered regions span residues Asn82 to Pro109, Gln347 to Glu366, and Ile391 to Ser500. Basic and acidic residues predominate over residues Ser397 to Pro419. Composition is skewed to low complexity over residues Gly425–Leu442 and Ser458–Glu468. Over residues Glu477–Ser500 the composition is skewed to polar residues. Ser479 is subject to Phosphoserine.

Belongs to the FAM83 family. Directly interacts (via DUF1669) with CSNK1A1 and CSNK1A1L.

The protein resides in the cell membrane. The protein is Protein FAM83F (FAM83F) of Homo sapiens (Human).